We begin with the raw amino-acid sequence, 375 residues long: Alanine racemase (375 aa).

The active-site Proton acceptor; specific for D-alanine is the K41. K41 carries the post-translational modification N6-(pyridoxal phosphate)lysine. Substrate is bound at residue R141. Y270 serves as the catalytic Proton acceptor; specific for L-alanine. A substrate-binding site is contributed by M317.

This sequence belongs to the alanine racemase family. The cofactor is pyridoxal 5'-phosphate.

The catalysed reaction is L-alanine = D-alanine. Its pathway is amino-acid biosynthesis; D-alanine biosynthesis; D-alanine from L-alanine: step 1/1. Functionally, catalyzes the interconversion of L-alanine and D-alanine. May also act on other amino acids. In Lactiplantibacillus plantarum (strain ATCC BAA-793 / NCIMB 8826 / WCFS1) (Lactobacillus plantarum), this protein is Alanine racemase (alr).